The chain runs to 94 residues: Protein canopy homolog 1 (94 aa).

The protein belongs to the canopy family.

This Mus musculus (Mouse) protein is Protein canopy homolog 1 (Cnpy1).